The sequence spans 229 residues: Large ribosomal subunit protein bL19cy (229 aa).

The transit peptide at 1–70 (MATSSHLLPQ…DSKKRKEFIA (70 aa)) directs the protein to the chloroplast.

It belongs to the bacterial ribosomal protein bL19 family. Part of the 50S ribosomal subunit.

The protein resides in the plastid. It is found in the chloroplast. In terms of biological role, located at the 30S-50S ribosomal subunit interface and binds directly to 23S ribosomal RNA. The sequence is that of Large ribosomal subunit protein bL19cy from Arabidopsis thaliana (Mouse-ear cress).